The chain runs to 246 residues: Chalcone--flavanone isomerase 1 (246 aa).

The substrate site is built by T59, N124, and S201.

The protein belongs to the chalcone isomerase family. In terms of tissue distribution, mostly expressed in siliques and flowers, and, to a lower extent, in leaves.

The enzyme catalyses a chalcone = a flavanone.. The protein operates within secondary metabolite biosynthesis; flavonoid biosynthesis. Catalyzes the intramolecular cyclization of bicyclic chalcones into tricyclic (S)-flavanones. Responsible for the isomerization of 4,2',4',6'-tetrahydroxychalcone (also termed chalcone) into naringenin. The polypeptide is Chalcone--flavanone isomerase 1 (CHI1) (Arabidopsis thaliana (Mouse-ear cress)).